The following is a 31-amino-acid chain: Protamine-Z (31 aa).

The disordered stretch occupies residues 1–31 (ARRRRSRRASRPVRRRRPRRVSRRRRARRRR).

Testis.

It localises to the nucleus. The protein resides in the chromosome. Its function is as follows. Protamines substitute for histones in the chromatin of sperm during the haploid phase of spermatogenesis. They compact sperm DNA into a highly condensed, stable and inactive complex. This Clupea harengus (Atlantic herring) protein is Protamine-Z.